The chain runs to 659 residues: Putative oxidoreductase AegA (659 aa).

5 consecutive 4Fe-4S ferredoxin-type domains span residues arginine 3–cysteine 22, histidine 47–aspartate 77, aspartate 78–threonine 107, valine 114–aspartate 147, and aspartate 218–leucine 252. Residues cysteine 12, cysteine 15, cysteine 18, cysteine 22, cysteine 56, cysteine 59, cysteine 64, cysteine 68, cysteine 87, cysteine 90, cysteine 93, cysteine 97, cysteine 121, cysteine 124, cysteine 133, cysteine 137, cysteine 227, cysteine 230, cysteine 236, and cysteine 240 each coordinate [4Fe-4S] cluster.

It depends on [4Fe-4S] cluster as a cofactor.

Functionally, involved in formate-dependent uric acid degradation under microaerobic and anaerobic conditions. May reduce the enzymes necessary for uric acid degradation. The sequence is that of Putative oxidoreductase AegA from Escherichia coli (strain K12).